The chain runs to 313 residues: Acetylglutamate kinase (313 aa).

Substrate is bound by residues 84 to 85, R106, and N210; that span reads GG.

The protein belongs to the acetylglutamate kinase family. ArgB subfamily.

The protein resides in the cytoplasm. The catalysed reaction is N-acetyl-L-glutamate + ATP = N-acetyl-L-glutamyl 5-phosphate + ADP. Its pathway is amino-acid biosynthesis; L-arginine biosynthesis; N(2)-acetyl-L-ornithine from L-glutamate: step 2/4. Functionally, catalyzes the ATP-dependent phosphorylation of N-acetyl-L-glutamate. In Gluconacetobacter diazotrophicus (strain ATCC 49037 / DSM 5601 / CCUG 37298 / CIP 103539 / LMG 7603 / PAl5), this protein is Acetylglutamate kinase.